The following is a 1401-amino-acid chain: Protein dispatched homolog 2 (1401 aa).

Disordered stretches follow at residues 1–91 and 113–138; these read MDGD…LAPA and DRAA…GTWK. Residues 170 to 190 traverse the membrane as a helical segment; that stretch reads VAVLMLCLAVIFLCTLAGLLG. N-linked (GlcNAc...) asparagine glycosylation is present at Asn-239. The tract at residues 241–264 is disordered; that stretch reads SSSHNTLRPAPRGSAQESAVRPRR. Residues Asn-349 and Asn-465 are each glycosylated (N-linked (GlcNAc...) asparagine). Positions 471–643 constitute an SSD domain; that stretch reads GMDLGLKQEL…LVWLPASAVL (173 aa). The next 11 helical transmembrane spans lie at 484-504, 510-530, 542-562, 589-609, 617-637, 704-724, 964-984, 990-1010, 1019-1039, 1064-1084, and 1088-1108; these read FLVQ…FGMA, LFLT…AFFL, FVNL…TLIF, FGYL…ASYL, CLAL…LVWL, YIWI…AGVS, PAVV…LGTW, LFSV…LVLL, ALFL…YCIS, AVGA…TVLL, and LGII…FFFQ. Disordered stretches follow at residues 1169–1192, 1229–1337, and 1352–1401; these read ARRR…PSVL, PALQ…NGKR, and SLPA…GYSS. The segment covering 1175–1184 has biased composition (polar residues); that stretch reads SFDTSTATSK. Positions 1259-1270 are enriched in low complexity; the sequence is PLPASPEAPAHS. The segment covering 1284 to 1305 has biased composition (polar residues); it reads SSASTLEGLSVSDETCLSTSEP. The segment covering 1352–1362 has biased composition (low complexity); sequence SLPASHHSSLS. At Arg-1366 the chain carries Omega-N-methylarginine.

It belongs to the dispatched family.

The protein localises to the membrane. This Homo sapiens (Human) protein is Protein dispatched homolog 2.